Here is a 314-residue protein sequence, read N- to C-terminus: GMP synthase [glutamine-hydrolyzing] subunit B (314 aa).

The GMPS ATP-PPase domain occupies 2–186 (FDPKKFVEEA…LGIPDEIVER (185 aa)). An ATP-binding site is contributed by 29–35 (SGGVDST).

Heterodimer composed of a glutamine amidotransferase subunit (A) and a GMP-binding subunit (B).

The enzyme catalyses XMP + L-glutamine + ATP + H2O = GMP + L-glutamate + AMP + diphosphate + 2 H(+). It functions in the pathway purine metabolism; GMP biosynthesis; GMP from XMP (L-Gln route): step 1/1. In terms of biological role, catalyzes the synthesis of GMP from XMP. This Methanopyrus kandleri (strain AV19 / DSM 6324 / JCM 9639 / NBRC 100938) protein is GMP synthase [glutamine-hydrolyzing] subunit B (guaAB).